A 141-amino-acid chain; its full sequence is HTH-type transcriptional repressor NsrR (141 aa).

The HTH rrf2-type domain occupies Gln2–Glu129. The segment at residues Ile28–Arg51 is a DNA-binding region (H-T-H motif). Positions 91, 96, and 102 each coordinate [2Fe-2S] cluster.

[2Fe-2S] cluster is required as a cofactor.

Its function is as follows. Nitric oxide-sensitive repressor of genes involved in protecting the cell against nitrosative stress. May require iron for activity. In Escherichia coli O157:H7 (strain EC4115 / EHEC), this protein is HTH-type transcriptional repressor NsrR.